Here is a 129-residue protein sequence, read N- to C-terminus: MAKEATRVRRRERKNITSGVAHVNSSFNNTMITITDAQGNAIAWSSAGAKGFKGSRKSTPFAAQIAAEDCAKKAQEHGMKSLEVEVCGPGSGRESALRALQAAGFMITSIRDVTPIPHNGCRPRKKRRV.

It belongs to the universal ribosomal protein uS11 family. Part of the 30S ribosomal subunit. Interacts with proteins S7 and S18. Binds to IF-3.

Its function is as follows. Located on the platform of the 30S subunit, it bridges several disparate RNA helices of the 16S rRNA. Forms part of the Shine-Dalgarno cleft in the 70S ribosome. This is Small ribosomal subunit protein uS11 from Sinorhizobium medicae (strain WSM419) (Ensifer medicae).